The following is a 290-amino-acid chain: Arylamine N-acetyltransferase 1 (290 aa).

N-acetylmethionine is present on M1. C68 serves as the catalytic Acyl-thioester intermediate. S103 is a binding site for CoA. 106 to 107 (VH) contacts substrate. Catalysis depends on residues H107 and D122. Y208 serves as a coordination point for CoA.

It belongs to the arylamine N-acetyltransferase family.

The protein resides in the cytoplasm. It catalyses the reaction an arylamine + acetyl-CoA = an N-acetylarylamine + CoA. Participates in the detoxification of a plethora of hydrazine and arylamine drugs. Acetylates both arylamines and arylalkylamines. The chain is Arylamine N-acetyltransferase 1 (Nat1) from Rattus norvegicus (Rat).